A 93-amino-acid chain; its full sequence is Cell division topological specificity factor (93 aa).

This sequence belongs to the MinE family.

In terms of biological role, prevents the cell division inhibition by proteins MinC and MinD at internal division sites while permitting inhibition at polar sites. This ensures cell division at the proper site by restricting the formation of a division septum at the midpoint of the long axis of the cell. This is Cell division topological specificity factor from Alkaliphilus oremlandii (strain OhILAs) (Clostridium oremlandii (strain OhILAs)).